Consider the following 96-residue polypeptide: Co-chaperonin GroES (96 aa).

This sequence belongs to the GroES chaperonin family. As to quaternary structure, heptamer of 7 subunits arranged in a ring. Interacts with the chaperonin GroEL.

The protein resides in the cytoplasm. Functionally, together with the chaperonin GroEL, plays an essential role in assisting protein folding. The GroEL-GroES system forms a nano-cage that allows encapsulation of the non-native substrate proteins and provides a physical environment optimized to promote and accelerate protein folding. GroES binds to the apical surface of the GroEL ring, thereby capping the opening of the GroEL channel. In Nitrosospira multiformis (strain ATCC 25196 / NCIMB 11849 / C 71), this protein is Co-chaperonin GroES.